Here is a 129-residue protein sequence, read N- to C-terminus: Small ribosomal subunit protein uS9 (129 aa).

It belongs to the universal ribosomal protein uS9 family.

This is Small ribosomal subunit protein uS9 from Chlorobium limicola (strain DSM 245 / NBRC 103803 / 6330).